Here is a 680-residue protein sequence, read N- to C-terminus: Zinc finger protein OBI1 (680 aa).

Residues 16–87 (VSFEDVAVDF…AEATEQCLPG (72 aa)) enclose the KRAB domain. Residues 263 to 280 (CHKIFPNKTELSNHDAMH) form a C2H2-type 1; degenerate zinc finger. 8 C2H2-type zinc fingers span residues 455-477 (FRCN…QRMH), 483-505 (HECK…QGIH), 511-533 (YECN…ERTH), 539-561 (FECK…QKIH), 567-589 (HKCK…QKTH), 595-617 (YECK…ETTH), 623-645 (YECK…QVIH), and 651-673 (FECK…QKIH).

In terms of processing, polyubiquitinated, leading to its degradation via the ubiquitin-proteasome pathway. Expressed during osteogenic differentiation where levels increase from the first days of differentiation and remain high during the whole process. Highly expressed in lung.

The protein resides in the nucleus. Functionally, may modulate osteogenic differentiation, at least in part, through the bone morphogenetic protein (BMP) signaling pathway, increasing RUNX2 activation and leading to osteoblast commitment and maturation. The sequence is that of Zinc finger protein OBI1 (ObI1) from Mus musculus (Mouse).